Reading from the N-terminus, the 640-residue chain is Asparagine synthetase domain-containing protein 1 (640 aa).

The For GATase activity role is filled by cysteine 2. Residues cysteine 2 to lysine 184 enclose the Glutamine amidotransferase type-2 domain. One can recognise an Asparagine synthetase domain in the interval glutamine 286–lysine 602.

This chain is Asparagine synthetase domain-containing protein 1 (ASNSD1), found in Bos taurus (Bovine).